The chain runs to 149 residues: Extracellular protease inhibitor 1 (149 aa).

A signal peptide spans 1–16; it reads MKSALLFTLVVAAVHA. Kazal-like domains lie at 29–86 and 88–141; these read ESNE…SSTG and QPPS…ACVG. 2 disulfides stabilise this stretch: cysteine 35-cysteine 65 and cysteine 39-cysteine 58. Asparagine 67 carries N-linked (GlcNAc...) asparagine glycosylation. 3 cysteine pairs are disulfide-bonded: cysteine 94/cysteine 124, cysteine 98/cysteine 117, and cysteine 106/cysteine 139.

Interacts with host subtilisin-like protease P69B.

It localises to the secreted. Functionally, secreted effector that interacts with and inhibits the pathogenesis-related P69B subtilisin-like serine protease of host tomato. Inhibition of host proteases by a pathogen extracellular protease inhibitor forms a specific type of defense-counterdefense mechanism between plants and microbial pathogens. This Phytophthora infestans (Potato late blight agent) protein is Extracellular protease inhibitor 1.